The following is a 338-amino-acid chain: D-erythrose-4-phosphate dehydrogenase (338 aa).

11–12 (RI) is an NAD(+) binding site. Substrate contacts are provided by residues 153–155 (SCT), arginine 199, 212–213 (TK), and arginine 235. The active-site Nucleophile is the cysteine 154. Asparagine 317 lines the NAD(+) pocket.

It belongs to the glyceraldehyde-3-phosphate dehydrogenase family. Epd subfamily. In terms of assembly, homotetramer.

It is found in the cytoplasm. It carries out the reaction D-erythrose 4-phosphate + NAD(+) + H2O = 4-phospho-D-erythronate + NADH + 2 H(+). It functions in the pathway cofactor biosynthesis; pyridoxine 5'-phosphate biosynthesis; pyridoxine 5'-phosphate from D-erythrose 4-phosphate: step 1/5. Its function is as follows. Catalyzes the NAD-dependent conversion of D-erythrose 4-phosphate to 4-phosphoerythronate. This Shewanella sp. (strain MR-4) protein is D-erythrose-4-phosphate dehydrogenase.